The chain runs to 51 residues: uncharacterized protein (51 aa).

This is an uncharacterized protein from Rickettsia conorii (strain ATCC VR-613 / Malish 7).